The chain runs to 243 residues: Small ribosomal subunit protein uS3 (243 aa).

Residues I39–R107 form the KH type-2 domain. The segment at A214–A243 is disordered. Positions S229–A243 are enriched in basic and acidic residues.

Belongs to the universal ribosomal protein uS3 family. As to quaternary structure, part of the 30S ribosomal subunit. Forms a tight complex with proteins S10 and S14.

Its function is as follows. Binds the lower part of the 30S subunit head. Binds mRNA in the 70S ribosome, positioning it for translation. In Agrobacterium fabrum (strain C58 / ATCC 33970) (Agrobacterium tumefaciens (strain C58)), this protein is Small ribosomal subunit protein uS3.